We begin with the raw amino-acid sequence, 352 residues long: Histidinol-phosphate aminotransferase 1 (352 aa).

The residue at position 211 (Lys211) is an N6-(pyridoxal phosphate)lysine.

Belongs to the class-II pyridoxal-phosphate-dependent aminotransferase family. Histidinol-phosphate aminotransferase subfamily. Homodimer. It depends on pyridoxal 5'-phosphate as a cofactor.

It carries out the reaction L-histidinol phosphate + 2-oxoglutarate = 3-(imidazol-4-yl)-2-oxopropyl phosphate + L-glutamate. Its pathway is amino-acid biosynthesis; L-histidine biosynthesis; L-histidine from 5-phospho-alpha-D-ribose 1-diphosphate: step 7/9. This Haemophilus influenzae (strain 86-028NP) protein is Histidinol-phosphate aminotransferase 1.